The primary structure comprises 105 residues: Large ribosomal subunit protein eL36 (105 aa).

It belongs to the eukaryotic ribosomal protein eL36 family. As to quaternary structure, component of the large ribosomal subunit.

The protein localises to the cytoplasm. Its subcellular location is the cytosol. Functionally, component of the large ribosomal subunit. The ribosome is a large ribonucleoprotein complex responsible for the synthesis of proteins in the cell. This is Large ribosomal subunit protein eL36 (RPL36) from Gallus gallus (Chicken).